A 137-amino-acid polypeptide reads, in one-letter code: Large ribosomal subunit protein uL16 (137 aa).

Positions 1–13 (MLQPKRRKYRKEQ) are enriched in basic residues. A disordered region spans residues 1–22 (MLQPKRRKYRKEQKGRNTGVAT).

This sequence belongs to the universal ribosomal protein uL16 family. Part of the 50S ribosomal subunit.

Functionally, binds 23S rRNA and is also seen to make contacts with the A and possibly P site tRNAs. The chain is Large ribosomal subunit protein uL16 from Polynucleobacter asymbioticus (strain DSM 18221 / CIP 109841 / QLW-P1DMWA-1) (Polynucleobacter necessarius subsp. asymbioticus).